We begin with the raw amino-acid sequence, 219 residues long: Octanoyltransferase (219 aa).

One can recognise a BPL/LPL catalytic domain in the interval 32-207; that stretch reads ASSPDQLWIV…TFSHNLGYQN (176 aa). Residues 71-78, 138-140, and 151-153 contribute to the substrate site; these read RGGQVTYH, SLG, and GLA. Cysteine 169 serves as the catalytic Acyl-thioester intermediate.

It belongs to the LipB family.

The protein resides in the cytoplasm. The enzyme catalyses octanoyl-[ACP] + L-lysyl-[protein] = N(6)-octanoyl-L-lysyl-[protein] + holo-[ACP] + H(+). The protein operates within protein modification; protein lipoylation via endogenous pathway; protein N(6)-(lipoyl)lysine from octanoyl-[acyl-carrier-protein]: step 1/2. Functionally, catalyzes the transfer of endogenously produced octanoic acid from octanoyl-acyl-carrier-protein onto the lipoyl domains of lipoate-dependent enzymes. Lipoyl-ACP can also act as a substrate although octanoyl-ACP is likely to be the physiological substrate. This Shewanella sediminis (strain HAW-EB3) protein is Octanoyltransferase.